Here is a 1017-residue protein sequence, read N- to C-terminus: Integrator complex subunit 3 (1017 aa).

The disordered stretch occupies residues 952–1017 (EYEDSSKPPK…KGSAVGSDSD (66 aa)). A compositionally biased stretch (acidic residues) spans 983 to 997 (NEEESVSSSASEEED).

This sequence belongs to the Integrator subunit 3 family. In terms of assembly, component of the Integrator complex, composed of core subunits INTS1, INTS2, INTS3, INTS4, INTS5, INTS6, INTS7, INTS8, INTS9/RC74, INTS10, INTS11/CPSF3L, INTS12, INTS13, INTS14 and INTS15. The core complex associates with protein phosphatase 2A subunits PPP2CA and PPP2R1A, to form the Integrator-PP2A (INTAC) complex. Component of the SOSS complex.

Its subcellular location is the nucleus. It is found in the cytoplasm. In terms of biological role, component of the integrator complex, a multiprotein complex that terminates RNA polymerase II (Pol II) transcription in the promoter-proximal region of genes. The integrator complex provides a quality checkpoint during transcription elongation by driving premature transcription termination of transcripts that are unfavorably configured for transcriptional elongation: the complex terminates transcription by (1) catalyzing dephosphorylation of the C-terminal domain (CTD) of Pol II subunit POLR2A/RPB1 and SUPT5H/SPT5, (2) degrading the exiting nascent RNA transcript via endonuclease activity and (3) promoting the release of Pol II from bound DNA. The integrator complex is also involved in terminating the synthesis of non-coding Pol II transcripts, such as enhancer RNAs (eRNAs), small nuclear RNAs (snRNAs), telomerase RNAs and long non-coding RNAs (lncRNAs). Within the integrator complex, INTS3 is involved in the post-termination step: INTS3 binds INTS7 in the open conformation of integrator complex and prevents the rebinding of Pol II to the integrator after termination cycle. Functionally, component of the SOSS complex, a multiprotein complex that functions downstream of the MRN complex to promote DNA repair and G2/M checkpoint. The SOSS complex associates with single-stranded DNA at DNA lesions and influences diverse endpoints in the cellular DNA damage response including cell-cycle checkpoint activation, recombinational repair and maintenance of genomic stability. The SOSS complex is required for efficient homologous recombination-dependent repair of double-strand breaks (DSBs) and ATM-dependent signaling pathways. In the SOSS complex, it is required for the assembly of the complex and for stabilization of the complex at DNA damage sites. This is Integrator complex subunit 3 (ints3) from Danio rerio (Zebrafish).